A 307-amino-acid polypeptide reads, in one-letter code: MARTEGDSWDLANSVGATATMVAAARAAATRRSRPIIADPFAEPLVRAVGLDLFTRAASGEVDLDEVAAGLGFVRMVDTFAARALFFDKFFADAIAAGLRQVVIVASGLDARPYRLPWPTGMRVYEIDQPEVIEFKTTTLARLGASPTADHHPVGIDLRDDWPSALRAAGFDAARPTAWLAEGVRIGFLPPEAETRLLDNVIELSAVGSRLAADYGTINGSSAESQQLAQQMTEGWRAHGLDMDIAGLTYPGEHTDVAAYLRSHGWKTATADHGDLVLAAGLAELTAADRQSPASTIGFVTAVRSTD.

S-adenosyl-L-methionine-binding positions include D128 and 157–158 (DL).

It belongs to the UPF0677 family.

Exhibits S-adenosyl-L-methionine-dependent methyltransferase activity. This Mycobacterium ulcerans (strain Agy99) protein is Putative S-adenosyl-L-methionine-dependent methyltransferase MUL_4430.